Reading from the N-terminus, the 145-residue chain is uncharacterized protein (145 aa).

Residues 16–36 form a helical membrane-spanning segment; the sequence is VLAYLLQLSASLVLPVAIWLI.

It localises to the mitochondrion membrane. This is an uncharacterized protein from Arabidopsis thaliana (Mouse-ear cress).